The following is a 290-amino-acid chain: Xyloglucan endotransglucosylase/hydrolase protein 9 (290 aa).

The N-terminal stretch at Met-1–Gly-26 is a signal peptide. The region spanning Ala-27–Tyr-215 is the GH16 domain. Residue Asn-55 is glycosylated (N-linked (GlcNAc...) asparagine). Glu-101 serves as the catalytic Nucleophile. Glu-105 (proton donor) is an active-site residue. Residue Glu-105 participates in xyloglucan binding. N-linked (GlcNAc...) asparagine glycosylation occurs at Asn-109. Xyloglucan-binding positions include Gln-118–Asn-120, Asn-128–Glu-130, Asp-194–Trp-195, and Gly-199. Intrachain disulfides connect Cys-223-Cys-234 and Cys-271-Cys-284. Residue Arg-276 participates in xyloglucan binding.

The protein belongs to the glycosyl hydrolase 16 family. XTH group 1 subfamily. Post-translationally, contains at least one intrachain disulfide bond essential for its enzymatic activity. As to expression, highly expressed in shoot apices. In the vegetative and reproductive phases, it accumulates in the shoot apex region, where cell division is most active. In the reproductive phase, it is also expressed in flower buds, flower stalks and internodes bearing flowers.

The protein resides in the secreted. It localises to the cell wall. Its subcellular location is the extracellular space. It is found in the apoplast. It catalyses the reaction breaks a beta-(1-&gt;4) bond in the backbone of a xyloglucan and transfers the xyloglucanyl segment on to O-4 of the non-reducing terminal glucose residue of an acceptor, which can be a xyloglucan or an oligosaccharide of xyloglucan.. Catalyzes xyloglucan endohydrolysis (XEH) and/or endotransglycosylation (XET). Cleaves and religates xyloglucan polymers, an essential constituent of the primary cell wall, and thereby participates in cell wall construction of growing tissues. Involved in internodal cell elongation. The protein is Xyloglucan endotransglucosylase/hydrolase protein 9 (XTH9) of Arabidopsis thaliana (Mouse-ear cress).